A 66-amino-acid polypeptide reads, in one-letter code: Large ribosomal subunit protein bL33c (66 aa).

This sequence belongs to the bacterial ribosomal protein bL33 family.

The protein resides in the plastid. It localises to the chloroplast. The sequence is that of Large ribosomal subunit protein bL33c from Aethionema grandiflorum (Persian stone-cress).